The chain runs to 426 residues: Histidine--tRNA ligase (426 aa).

The protein belongs to the class-II aminoacyl-tRNA synthetase family. In terms of assembly, homodimer.

It is found in the cytoplasm. The catalysed reaction is tRNA(His) + L-histidine + ATP = L-histidyl-tRNA(His) + AMP + diphosphate + H(+). This Streptococcus dysgalactiae subsp. equisimilis (Streptococcus equisimilis) protein is Histidine--tRNA ligase (hisS).